Consider the following 144-residue polypeptide: Peroxisome assembly protein 22 (144 aa).

A helical membrane pass occupies residues Tyr13–Ala35.

This sequence belongs to the peroxin-22 family.

The protein resides in the peroxisome membrane. Involved in peroxisome biogenesis. The protein is Peroxisome assembly protein 22 (PEX22) of Eremothecium gossypii (strain ATCC 10895 / CBS 109.51 / FGSC 9923 / NRRL Y-1056) (Yeast).